Reading from the N-terminus, the 228-residue chain is Protein K8.1 (228 aa).

Residues Met-1 to Ala-26 form the signal peptide. 4 N-linked (GlcNAc...) asparagine; by host glycosylation sites follow: Asn-55, Asn-60, Asn-70, and Asn-85. The tract at residues Gly-77–Arg-113 is disordered. Positions Ser-78–Gly-97 are enriched in polar residues. The chain crosses the membrane as a helical span at residues Leu-197–Val-217.

The protein localises to the host membrane. This chain is Protein K8.1 (K8.1), found in Human herpesvirus 8 type P (isolate GK18) (HHV-8).